An 86-amino-acid polypeptide reads, in one-letter code: Small ribosomal subunit protein bS20 (86 aa).

The disordered stretch occupies residues 1–23 (MANIKSSKKDSIKSRKKKKLNAS).

The protein belongs to the bacterial ribosomal protein bS20 family.

In terms of biological role, binds directly to 16S ribosomal RNA. The sequence is that of Small ribosomal subunit protein bS20 from Buchnera aphidicola subsp. Baizongia pistaciae (strain Bp).